Reading from the N-terminus, the 586-residue chain is Beta-fructofuranosidase, insoluble isoenzyme 3 (586 aa).

The signal sequence occupies residues 1–26; that stretch reads MATARARAALVFVALLQMAAVVVVRA. The active site involves D61. N-linked (GlcNAc...) asparagine glycans are attached at residues N154, N179, N341, N390, and N479.

This sequence belongs to the glycosyl hydrolase 32 family.

The protein localises to the secreted. It localises to the extracellular space. It is found in the apoplast. Its subcellular location is the cell wall. The enzyme catalyses Hydrolysis of terminal non-reducing beta-D-fructofuranoside residues in beta-D-fructofuranosides.. The polypeptide is Beta-fructofuranosidase, insoluble isoenzyme 3 (CIN3) (Oryza sativa subsp. indica (Rice)).